The chain runs to 477 residues: Protoporphyrinogen oxidase (477 aa).

Residues 9-14, Trp-42, 57-60, Val-257, Ala-449, and 454-456 each bind FAD; these read GGGISG, GPRG, and VAV.

This sequence belongs to the protoporphyrinogen/coproporphyrinogen oxidase family. Protoporphyrinogen oxidase subfamily. In terms of assembly, monomer. Homodimer. It depends on FAD as a cofactor.

It is found in the mitochondrion inner membrane. It catalyses the reaction protoporphyrinogen IX + 3 O2 = protoporphyrin IX + 3 H2O2. It functions in the pathway porphyrin-containing compound metabolism; protoporphyrin-IX biosynthesis; protoporphyrin-IX from protoporphyrinogen-IX: step 1/1. Catalyzes the 6-electron oxidation of protoporphyrinogen-IX to form protoporphyrin-IX. The protein is Protoporphyrinogen oxidase (PPOX) of Macaca fascicularis (Crab-eating macaque).